The sequence spans 138 residues: Acidic phospholipase A2 Drk-a1 (138 aa).

The N-terminal stretch at 1 to 16 (MRTLWIVAVCLIGVEG) is a signal peptide. 7 disulfides stabilise this stretch: Cys-42/Cys-131, Cys-44/Cys-60, Cys-59/Cys-111, Cys-65/Cys-138, Cys-66/Cys-104, Cys-73/Cys-97, and Cys-91/Cys-102. Residues Tyr-43, Gly-45, and Gly-47 each coordinate Ca(2+). The active site involves His-63. Asp-64 is a Ca(2+) binding site. Residue Asp-105 is part of the active site.

The protein belongs to the phospholipase A2 family. Group II subfamily. D49 sub-subfamily. Requires Ca(2+) as cofactor. As to expression, expressed by the venom gland.

It localises to the secreted. It carries out the reaction a 1,2-diacyl-sn-glycero-3-phosphocholine + H2O = a 1-acyl-sn-glycero-3-phosphocholine + a fatty acid + H(+). Snake venom phospholipase A2 (PLA2) that exhibits high hydrolytic activities and shows strong preference for the anionic micelles (dPPC with deoxycholate) to the zwitterionic micelles (dPPC with Triton X-100). PLA2 catalyzes the calcium-dependent hydrolysis of the 2-acyl groups in 3-sn-phosphoglycerides. This chain is Acidic phospholipase A2 Drk-a1, found in Daboia russelii (Russel's viper).